The following is a 385-amino-acid chain: tRNA 2-selenouridine synthase (385 aa).

Residues 15 to 138 (FIADTPLIDV…ARQFLISTID (124 aa)) form the Rhodanese domain. Cysteine 98 serves as the catalytic S-selanylcysteine intermediate.

This sequence belongs to the SelU family. In terms of assembly, monomer.

It carries out the reaction 5-methylaminomethyl-2-thiouridine(34) in tRNA + selenophosphate + (2E)-geranyl diphosphate + H2O + H(+) = 5-methylaminomethyl-2-selenouridine(34) in tRNA + (2E)-thiogeraniol + phosphate + diphosphate. The catalysed reaction is 5-methylaminomethyl-2-thiouridine(34) in tRNA + (2E)-geranyl diphosphate = 5-methylaminomethyl-S-(2E)-geranyl-thiouridine(34) in tRNA + diphosphate. The enzyme catalyses 5-methylaminomethyl-S-(2E)-geranyl-thiouridine(34) in tRNA + selenophosphate + H(+) = 5-methylaminomethyl-2-(Se-phospho)selenouridine(34) in tRNA + (2E)-thiogeraniol. It catalyses the reaction 5-methylaminomethyl-2-(Se-phospho)selenouridine(34) in tRNA + H2O = 5-methylaminomethyl-2-selenouridine(34) in tRNA + phosphate. Involved in the post-transcriptional modification of the uridine at the wobble position (U34) of tRNA(Lys), tRNA(Glu) and tRNA(Gln). Catalyzes the conversion of 2-thiouridine (S2U-RNA) to 2-selenouridine (Se2U-RNA). Acts in a two-step process involving geranylation of 2-thiouridine (S2U) to S-geranyl-2-thiouridine (geS2U) and subsequent selenation of the latter derivative to 2-selenouridine (Se2U) in the tRNA chain. The protein is tRNA 2-selenouridine synthase of Nitrosomonas europaea (strain ATCC 19718 / CIP 103999 / KCTC 2705 / NBRC 14298).